We begin with the raw amino-acid sequence, 400 residues long: Putative C-type lectin domain family 20 member A (400 aa).

A signal peptide spans 1–20 (MLPRALLLSFCAAALQLVSS). C-type lectin domains lie at 26 to 131 (LVKE…FLCY) and 159 to 275 (ISGQ…FFCF). 4 cysteine pairs are disulfide-bonded: Cys-40–Cys-130, Cys-105–Cys-122, Cys-180–Cys-274, and Cys-248–Cys-266. The disordered stretch occupies residues 287 to 346 (ELPPLFHTSPTEMTEETTPRPGRAVASVGSGTDRRDTAAATEAQHLSSESKEKTSAQKSG).

The sequence is that of Putative C-type lectin domain family 20 member A from Homo sapiens (Human).